The primary structure comprises 311 residues: D-alanine--D-alanine ligase (311 aa).

The ATP-grasp domain occupies 105-306 (KQLYIHAGLP…FSALLDRLIE (202 aa)). 133 to 188 (ADRLGLPVVVKPEHEGSSIGLSIVRNRDQLAAAVETGWQYDRRCLIEKYVHGIEIT) provides a ligand contact to ATP. Mg(2+) contacts are provided by D261, E273, and N275.

This sequence belongs to the D-alanine--D-alanine ligase family. It depends on Mg(2+) as a cofactor. The cofactor is Mn(2+).

It localises to the cytoplasm. It catalyses the reaction 2 D-alanine + ATP = D-alanyl-D-alanine + ADP + phosphate + H(+). The protein operates within cell wall biogenesis; peptidoglycan biosynthesis. Its function is as follows. Cell wall formation. This is D-alanine--D-alanine ligase from Syntrophobacter fumaroxidans (strain DSM 10017 / MPOB).